The sequence spans 118 residues: V-type proton ATPase subunit G 3 (118 aa).

The interval 1–34 (MTSQSQGIHQLLQAEKRAKDKLEEAKKRKGKRLK) is disordered. A coiled-coil region spans residues 5–54 (SQGIHQLLQAEKRAKDKLEEAKKRKGKRLKQAKEEAMVEIDQYRMQRDKE). The segment covering 14–26 (AEKRAKDKLEEAK) has biased composition (basic and acidic residues).

It belongs to the V-ATPase G subunit family. As to quaternary structure, V-ATPase is a heteromultimeric enzyme made up of two complexes: the ATP-hydrolytic V1 complex and the proton translocation V0 complex. The V1 complex consists of three catalytic AB heterodimers that form a heterohexamer, three peripheral stalks each consisting of EG heterodimers, one central rotor including subunits D and F, and the regulatory subunits C and H. The proton translocation complex V0 consists of the proton transport subunit a, a ring of proteolipid subunits c9c'', rotary subunit d, subunits e and f, and the accessory subunits ATP6AP1/Ac45 and ATP6AP2/PRR. Kidney.

Its function is as follows. Subunit of the V1 complex of vacuolar(H+)-ATPase (V-ATPase), a multisubunit enzyme composed of a peripheral complex (V1) that hydrolyzes ATP and a membrane integral complex (V0) that translocates protons. V-ATPase is responsible for acidifying and maintaining the pH of intracellular compartments and in some cell types, is targeted to the plasma membrane, where it is responsible for acidifying the extracellular environment. The protein is V-type proton ATPase subunit G 3 (ATP6V1G3) of Homo sapiens (Human).